Here is a 458-residue protein sequence, read N- to C-terminus: Secretion-regulating guanine nucleotide exchange factor (458 aa).

7 RCC1 repeats span residues 15–67 (AALF…VTDG), 68–119 (GDLF…LTEN), 120–171 (GQVL…ATAS), 172–230 (GIVF…LTDA), 231–283 (GEVY…QTET), 284–351 (GKMF…IIGG), and 352–402 (VCYS…LCQL). The tract at residues 420–458 (DAIEDTESQKAMDKERNWKERQSETSTQSQSDWSRNGGL) is disordered. A compositionally biased stretch (basic and acidic residues) spans 426 to 442 (ESQKAMDKERNWKERQS). At S427 the chain carries Phosphoserine.

In terms of assembly, interacts with SEC5. The interaction occurs only in the presence of magnesium or manganese and is stimulated by dCTP or GTP.

The protein localises to the cytoplasm. Its subcellular location is the nucleus. In terms of biological role, probable guanine nucleotide exchange factor (GEF), which may be involved in the secretion process. This chain is Secretion-regulating guanine nucleotide exchange factor (SERGEF), found in Homo sapiens (Human).